The following is a 171-amino-acid chain: Shikimate kinase (171 aa).

11-16 (ATGKTT) is an ATP binding site. T15 provides a ligand contact to Mg(2+). Positions 33, 57, and 79 each coordinate substrate. R117 lines the ATP pocket. R136 contacts substrate.

It belongs to the shikimate kinase family. Monomer. Mg(2+) is required as a cofactor.

The protein localises to the cytoplasm. It catalyses the reaction shikimate + ATP = 3-phosphoshikimate + ADP + H(+). The protein operates within metabolic intermediate biosynthesis; chorismate biosynthesis; chorismate from D-erythrose 4-phosphate and phosphoenolpyruvate: step 5/7. Catalyzes the specific phosphorylation of the 3-hydroxyl group of shikimic acid using ATP as a cosubstrate. In Thermoanaerobacter pseudethanolicus (strain ATCC 33223 / 39E) (Clostridium thermohydrosulfuricum), this protein is Shikimate kinase.